Here is a 320-residue protein sequence, read N- to C-terminus: L-lactate dehydrogenase 2 (320 aa).

Residues 18–19, Asp40, and Arg45 contribute to the NAD(+) site; that span reads AV. Residues Gln88, Arg94, and 126 to 129 contribute to the substrate site; that span reads NPVD. NAD(+) contacts are provided by residues 124–126 and Ser149; that span reads ITN. Residue 154 to 157 coordinates substrate; the sequence is DSAR. Residues Arg159 and 171–176 each bind beta-D-fructose 1,6-bisphosphate; that span reads KNVHAY. The Proton acceptor role is filled by His181. Tyr228 bears the Phosphotyrosine mark. Position 237 (Thr237) interacts with substrate.

This sequence belongs to the LDH/MDH superfamily. LDH family. Homotetramer.

The protein resides in the cytoplasm. The catalysed reaction is (S)-lactate + NAD(+) = pyruvate + NADH + H(+). Its pathway is fermentation; pyruvate fermentation to lactate; (S)-lactate from pyruvate: step 1/1. Allosterically activated by fructose 1,6-bisphosphate (FBP). Catalyzes the conversion of lactate to pyruvate. This chain is L-lactate dehydrogenase 2, found in Bifidobacterium longum subsp. longum (strain ATCC 15707 / DSM 20219 / JCM 1217 / NCTC 11818 / E194b).